A 292-amino-acid polypeptide reads, in one-letter code: REEYPDRIMNTFSVVPSPKVSDTVVEPYNATLSVHQLVENTDETYCIDNEALYDICFRTLKLTTPTYGDLNHLVSATMSGVTTCLRFPGQLNADLRKLAVNMVPFPRLHFFMPGFAPLTSRGSQQYRALTVPELTQQMFDAKNMMAACDPRHGRYLTVAAIFRGRMSMKEVDEQMLNVQNKNSSYFVEWIPNNVKTAVCDIPPRGLKMSATFIGNSTAIQELFKRISEQFTAMFRRKAFLHWYTGEGMDEMEFTEAESNMNDLVSEYQQYQDATAEEEGEFDEEEEGDEEAA.

GTP is bound by residues Asn-49 and Asn-71. Residues 265-292 (SEYQQYQDATAEEEGEFDEEEEGDEEAA) form a disordered region. The segment covering 274-292 (TAEEEGEFDEEEEGDEEAA) has biased composition (acidic residues).

Belongs to the tubulin family. In terms of assembly, dimer of alpha and beta chains. A typical microtubule is a hollow water-filled tube with an outer diameter of 25 nm and an inner diameter of 15 nM. Alpha-beta heterodimers associate head-to-tail to form protofilaments running lengthwise along the microtubule wall with the beta-tubulin subunit facing the microtubule plus end conferring a structural polarity. Microtubules usually have 13 protofilaments but different protofilament numbers can be found in some organisms and specialized cells. Mg(2+) serves as cofactor.

The protein resides in the cytoplasm. The protein localises to the cytoskeleton. Its function is as follows. Tubulin is the major constituent of microtubules, a cylinder consisting of laterally associated linear protofilaments composed of alpha- and beta-tubulin heterodimers. Microtubules grow by the addition of GTP-tubulin dimers to the microtubule end, where a stabilizing cap forms. Below the cap, tubulin dimers are in GDP-bound state, owing to GTPase activity of alpha-tubulin. The protein is Tubulin beta chain of Strongylocentrotus purpuratus (Purple sea urchin).